The following is a 179-amino-acid chain: Large ribosomal subunit protein uL6 (179 aa).

Belongs to the universal ribosomal protein uL6 family. Part of the 50S ribosomal subunit.

Its function is as follows. This protein binds to the 23S rRNA, and is important in its secondary structure. It is located near the subunit interface in the base of the L7/L12 stalk, and near the tRNA binding site of the peptidyltransferase center. This Mycobacteroides abscessus (strain ATCC 19977 / DSM 44196 / CCUG 20993 / CIP 104536 / JCM 13569 / NCTC 13031 / TMC 1543 / L948) (Mycobacterium abscessus) protein is Large ribosomal subunit protein uL6.